The primary structure comprises 431 residues: Glutamate-1-semialdehyde 2,1-aminomutase (431 aa).

Position 265 is an N6-(pyridoxal phosphate)lysine (Lys265).

It belongs to the class-III pyridoxal-phosphate-dependent aminotransferase family. HemL subfamily. Homodimer. Requires pyridoxal 5'-phosphate as cofactor.

The protein resides in the cytoplasm. It catalyses the reaction (S)-4-amino-5-oxopentanoate = 5-aminolevulinate. Its pathway is porphyrin-containing compound metabolism; protoporphyrin-IX biosynthesis; 5-aminolevulinate from L-glutamyl-tRNA(Glu): step 2/2. This is Glutamate-1-semialdehyde 2,1-aminomutase from Vibrio parahaemolyticus serotype O3:K6 (strain RIMD 2210633).